Reading from the N-terminus, the 357-residue chain is Dehydrogenase FUB6 (357 aa).

Residues M1–S17 are compositionally biased toward polar residues. The segment at M1–P22 is disordered.

Belongs to the zinc-containing alcohol dehydrogenase family. Quinone oxidoreductase subfamily.

It functions in the pathway mycotoxin biosynthesis. Dehydrogenase; part of the gene cluster that mediates the biosynthesis of fusaric acid, a mycotoxin with low to moderate toxicity to animals and humans, but with high phytotoxic properties. L-aspartate is suggested as fusaric acid amino acid precursor that is activated and further processed to O-acetyl-L-homoserine by cluster enzymes aspartate kinase FUB3 and homoserine O-acetyltransferase FUB5, as well as enzymes of the primary metabolism. The polyketide synthase (PKS) FUB1 generates the triketide trans-2-hexenal which is presumptively released by the hydrolase FUB4 and linked to the NRPS-bound amino acid precursor by NAD(P)-dependent dehydrogenase FUB6. FUB1, FUB4, and the non-canonical NRPS Fub8 may form an enzyme complex. Further processing of the NRPS-bound intermediate might be carried out by FUB6 and the O-acetylhomoserine FUB7, enabling a spontaneous electrocyclization to close the carbon backbone of fusaric acid. Dihydrofusaric acid is likely to be released via reduction by the thioester reductase (TR) domain of FUB8 whereupon the final oxidation to fusaric acid may (also) be performed by the FMN-dependent dehydrogenase FUB9. This is Dehydrogenase FUB6 from Fusarium oxysporum f. sp. lycopersici (strain 4287 / CBS 123668 / FGSC 9935 / NRRL 34936) (Fusarium vascular wilt of tomato).